Reading from the N-terminus, the 389-residue chain is Protein CysO (389 aa).

Position 127 is an N6-(pyridoxal phosphate)lysine (Lys-127). Pyridoxal 5'-phosphate is bound by residues Asn-155, Gly-261 to His-265, and Ser-341.

It belongs to the cysteine synthase/cystathionine beta-synthase family. Homodimer. It depends on pyridoxal 5'-phosphate as a cofactor.

It catalyses the reaction O-acetyl-L-serine + hydrogen sulfide = L-cysteine + acetate. The enzyme catalyses O-phospho-L-serine + hydrogen sulfide + H(+) = L-cysteine + phosphate. The catalysed reaction is L-homocysteine + L-serine = L,L-cystathionine + H2O. Its pathway is amino-acid biosynthesis; L-cysteine biosynthesis; L-cysteine from L-serine: step 2/2. In terms of biological role, cysteine synthase that can also catalyze the synthesis of S-sulfo-L-cysteine from thiosulfate and O(3)-acetyl-L-serine, as well as the sulfhydrylation of L-serine by sulfide. The polypeptide is Protein CysO (cysO) (Aeropyrum pernix (strain ATCC 700893 / DSM 11879 / JCM 9820 / NBRC 100138 / K1)).